The following is a 139-amino-acid chain: Cytochrome c-type biogenesis protein CcmE (139 aa).

At 1-7 (MTKRQNR) the chain is on the cytoplasmic side. A helical; Signal-anchor for type II membrane protein membrane pass occupies residues 8-28 (MTLVALLVIGVSLTGYLGLKA). Over 29-139 (FNENLLYFFS…ADALEKAKNK (111 aa)) the chain is Periplasmic. Heme is bound by residues His-120 and Tyr-124.

Belongs to the CcmE/CycJ family.

The protein resides in the cell inner membrane. Its function is as follows. Heme chaperone required for the biogenesis of c-type cytochromes. Transiently binds heme delivered by CcmC and transfers the heme to apo-cytochromes in a process facilitated by CcmF and CcmH. In Ruthia magnifica subsp. Calyptogena magnifica, this protein is Cytochrome c-type biogenesis protein CcmE.